Consider the following 1269-residue polypeptide: Rho GTPase-activating protein 29 (1269 aa).

4 positions are modified to phosphoserine: serine 171, serine 176, serine 179, and serine 190. The region spanning 192–462 (IELDSMLLKN…SAKLYDPGQE (271 aa)) is the F-BAR domain. Residues 296 to 418 (RKNEMEKQRK…EILTQLRKLV (123 aa)) are a coiled coil. 2 disordered regions span residues 472 to 523 (SAEE…NSAD) and 540 to 599 (DSES…NSLG). Phosphoserine is present on residues serine 499, serine 519, and serine 552. The span at 540-559 (DSESTGGSSESRSLDSESIS) shows a compositional bias: low complexity. A Phorbol-ester/DAG-type zinc finger spans residues 612 to 657 (THKFRKLRSPTKCRDCEGIVVFHGVECEECLLVCHRKCLENLVIIC). Residues 671-886 (AEFTQVAKKE…FLITYSQKIF (216 aa)) enclose the Rho-GAP domain. The interval 909-936 (PGYLPKSLLSPEERDPERSMKSLFFSSK) is disordered. Serine 918 is modified (phosphoserine). The span at 919-928 (PEERDPERSM) shows a compositional bias: basic and acidic residues. Phosphoserine occurs at positions 954 and 1026. A disordered region spans residues 1120–1269 (RSSGDHPVSI…DLEDEIPQFV (150 aa)). Residues 1128-1145 (SITQPSKPYTEPVRSTRQ) show a composition bias toward polar residues. Phosphoserine is present on residues serine 1152 and serine 1154. The span at 1162-1172 (TPRTLQPQHWT) shows a compositional bias: polar residues. The segment covering 1229–1241 (SRPEEKAEERDQP) has biased composition (basic and acidic residues). The span at 1259-1269 (EDLEDEIPQFV) shows a compositional bias: acidic residues. The segment at 1266–1269 (PQFV) is interaction with PTPN13/PTPL1.

Interacts with PTPN13/PTPL1. Interacts with RAP2A via its coiled coil domain. Interacts with RASIP1.

In terms of biological role, GTPase activator for the Rho-type GTPases by converting them to an inactive GDP-bound state. Has strong activity toward RHOA, and weaker activity toward RAC1 and CDC42. May act as a specific effector of RAP2A to regulate Rho. In concert with RASIP1, suppresses RhoA signaling and dampens ROCK and MYH9 activities in endothelial cells and plays an essential role in blood vessel tubulogenesis. This Bos taurus (Bovine) protein is Rho GTPase-activating protein 29 (ARHGAP29).